Here is a 426-residue protein sequence, read N- to C-terminus: Phosphomethylpyrimidine synthase (426 aa).

Substrate-binding positions include asparagine 65, methionine 94, tyrosine 123, histidine 162, 184-186, 225-228, and glutamate 264; these read SRG and DGMR. Histidine 268 provides a ligand contact to Zn(2+). A substrate-binding site is contributed by tyrosine 291. Residue histidine 332 coordinates Zn(2+). Residues cysteine 408, cysteine 411, and cysteine 415 each coordinate [4Fe-4S] cluster.

It belongs to the ThiC family. It depends on [4Fe-4S] cluster as a cofactor.

The enzyme catalyses 5-amino-1-(5-phospho-beta-D-ribosyl)imidazole + S-adenosyl-L-methionine = 4-amino-2-methyl-5-(phosphooxymethyl)pyrimidine + CO + 5'-deoxyadenosine + formate + L-methionine + 3 H(+). It functions in the pathway cofactor biosynthesis; thiamine diphosphate biosynthesis. Catalyzes the synthesis of the hydroxymethylpyrimidine phosphate (HMP-P) moiety of thiamine from aminoimidazole ribotide (AIR) in a radical S-adenosyl-L-methionine (SAM)-dependent reaction. The protein is Phosphomethylpyrimidine synthase of Methanococcus maripaludis (strain DSM 14266 / JCM 13030 / NBRC 101832 / S2 / LL).